A 244-amino-acid polypeptide reads, in one-letter code: MNKNYKNNLNESINNPSKILNEKIILGLDEAGRGPVLGPMVISVVKVTEKDLDKINSLDLKDSKQLTKKRREEYYNIINECFEVQKIVLAPEKIDEYMKTSNLNKIELSAFSKLSNHFLKEYENVKIFIDACSSSEQSFLNQFKAKLINKKVEIIAEHKADEKYKIVSAASIIAKVTRDNIIESYKEEFGDIGSGYPGDPKTKEFLKRFVKEHKKLPKIARGSWATSKKLLKEFEESKLHKWVK.

The region spanning 23 to 236 (KIILGLDEAG…SKKLLKEFEE (214 aa)) is the RNase H type-2 domain. Residues aspartate 29, glutamate 30, and aspartate 130 each coordinate a divalent metal cation.

The protein belongs to the RNase HII family. Mn(2+) is required as a cofactor. It depends on Mg(2+) as a cofactor.

Its subcellular location is the cytoplasm. It carries out the reaction Endonucleolytic cleavage to 5'-phosphomonoester.. Endonuclease that specifically degrades the RNA of RNA-DNA hybrids. This is Ribonuclease HII from Methanococcus vannielii (strain ATCC 35089 / DSM 1224 / JCM 13029 / OCM 148 / SB).